The sequence spans 386 residues: Putative 8-amino-7-oxononanoate synthase (386 aa).

Arg26 lines the substrate pocket. Residue 113 to 114 (GY) participates in pyridoxal 5'-phosphate binding. Residue His138 participates in substrate binding. Pyridoxal 5'-phosphate-binding positions include Ser186, 211 to 214 (DDAH), and 240 to 243 (TLSK). At Lys243 the chain carries N6-(pyridoxal phosphate)lysine. Residue Thr352 participates in substrate binding.

It belongs to the class-II pyridoxal-phosphate-dependent aminotransferase family. BioF subfamily. As to quaternary structure, homodimer. Pyridoxal 5'-phosphate is required as a cofactor.

It carries out the reaction 6-carboxyhexanoyl-[ACP] + L-alanine + H(+) = (8S)-8-amino-7-oxononanoate + holo-[ACP] + CO2. The protein operates within cofactor biosynthesis; biotin biosynthesis. In terms of biological role, catalyzes the decarboxylative condensation of pimeloyl-[acyl-carrier protein] and L-alanine to produce 8-amino-7-oxononanoate (AON), [acyl-carrier protein], and carbon dioxide. The chain is Putative 8-amino-7-oxononanoate synthase (bioF) from Phenylobacterium zucineum (strain HLK1).